Here is a 211-residue protein sequence, read N- to C-terminus: Ethylene-responsive transcription factor LEP (211 aa).

Disordered regions lie at residues Met1–Leu21 and Asn74–Val110. A DNA-binding region (AP2/ERF) is located at residues Arg19 to Val76. A compositionally biased stretch (low complexity) spans Pro81–Pro92. Positions Asp93 to Asn107 are enriched in pro residues.

This sequence belongs to the AP2/ERF transcription factor family. ERF subfamily. As to expression, expressed in germinating seeds. Present in young shoots, at low levels, especially in leaf primordia and developing leaf blades. Also detected in vascular tissue, mostly in xylem, of young leaves, petioles and hypocotyls.

Its subcellular location is the nucleus. Its function is as follows. Cell division-promoting factor involved in leaf blade differentiation, inflorescence branching, as well as in carpel and silique shape. Promotes the number of xylem cells. Positively regulates the gibberellin signaling pathway leading to germination, hypocotyl elongation, and leaf expansion. Probably acts as a transcriptional activator. Binds to the GCC-box pathogenesis-related promoter element. May be involved in the regulation of gene expression by stress factors and by components of stress signal transduction pathways. This Arabidopsis thaliana (Mouse-ear cress) protein is Ethylene-responsive transcription factor LEP (LEP).